Consider the following 403-residue polypeptide: MEFDRILIRYGELSTKGKNRKQFVTRLAHNVKRAMKDLPEVRIHGERDRMYIILNGEDHKLAEERLKPIFGIQSFSPAVRVNLELDEVKNAALALVQDVHEQNGTFKVAARRSHREFPLDSNEINQEIGAYVLQNIEDLSVNVKNPDVKLTIDVRKEGVFLSCRTIIGAAGLPVGSSGRAMLMLSGGIDSPVAGYLAQKRGVEIEAVHFHSPPYTSEQAKQKAVDLAAKLAKYGGEVKMHIVPFTEIQEMIKQQIPESVIMTVTRRMMLKITDELRRKRNGLAIVNGESLGQVASQTLESMLAINAVTTTPIIRPVVSMDKNEIIQIAQKIDTYNLSVQPFEDCCTIFTPPSPKTKPKLDKIERYESFTDFDSLITKALDNIETITVNITENTQVKDEFADLF.

Residues 60–165 (KLAEERLKPI…KEGVFLSCRT (106 aa)) enclose the THUMP domain. ATP contacts are provided by residues 183–184 (ML), 208–209 (HF), Arg265, Gly287, and Gln296.

Belongs to the ThiI family.

It localises to the cytoplasm. The enzyme catalyses [ThiI sulfur-carrier protein]-S-sulfanyl-L-cysteine + a uridine in tRNA + 2 reduced [2Fe-2S]-[ferredoxin] + ATP + H(+) = [ThiI sulfur-carrier protein]-L-cysteine + a 4-thiouridine in tRNA + 2 oxidized [2Fe-2S]-[ferredoxin] + AMP + diphosphate. The catalysed reaction is [ThiS sulfur-carrier protein]-C-terminal Gly-Gly-AMP + S-sulfanyl-L-cysteinyl-[cysteine desulfurase] + AH2 = [ThiS sulfur-carrier protein]-C-terminal-Gly-aminoethanethioate + L-cysteinyl-[cysteine desulfurase] + A + AMP + 2 H(+). It functions in the pathway cofactor biosynthesis; thiamine diphosphate biosynthesis. Catalyzes the ATP-dependent transfer of a sulfur to tRNA to produce 4-thiouridine in position 8 of tRNAs, which functions as a near-UV photosensor. Also catalyzes the transfer of sulfur to the sulfur carrier protein ThiS, forming ThiS-thiocarboxylate. This is a step in the synthesis of thiazole, in the thiamine biosynthesis pathway. The sulfur is donated as persulfide by IscS. This Listeria welshimeri serovar 6b (strain ATCC 35897 / DSM 20650 / CCUG 15529 / CIP 8149 / NCTC 11857 / SLCC 5334 / V8) protein is Probable tRNA sulfurtransferase.